A 204-amino-acid chain; its full sequence is Somatotropin (204 aa).

The N-terminal stretch at 1–17 (MNSVVLQLSVVCLGVSS) is a signal peptide. Pyrrolidone carboxylic acid is present on glutamine 18. A Zn(2+)-binding site is contributed by histidine 36. A disulfide bridge connects residues cysteine 69 and cysteine 177. Glutamate 186 is a Zn(2+) binding site. Cysteines 194 and 202 form a disulfide.

Belongs to the somatotropin/prolactin family.

The protein resides in the secreted. In terms of biological role, growth hormone plays an important role in growth control and involved in the regulation of several anabolic processes. The sequence is that of Somatotropin (gh) from Oreochromis mossambicus (Mozambique tilapia).